The chain runs to 379 residues: Probable leucine aminopeptidase TRV_05286 (379 aa).

Residues 1–18 (MKIATLAVVSAFAATAIA) form the signal peptide. Residues H182 and D201 each coordinate Zn(2+). N-linked (GlcNAc...) asparagine glycans are attached at residues N202 and N226. The Zn(2+) site is built by E240 and D267. A disulfide bridge connects residues C312 and C316. H345 provides a ligand contact to Zn(2+).

This sequence belongs to the peptidase M28 family. M28E subfamily. As to quaternary structure, monomer. Requires Zn(2+) as cofactor.

It is found in the secreted. In terms of biological role, probable extracellular aminopeptidase which contributes to pathogenicity. This chain is Probable leucine aminopeptidase TRV_05286, found in Trichophyton verrucosum (strain HKI 0517).